The primary structure comprises 102 residues: PqqA binding protein (102 aa).

It belongs to the PqqD family. Monomer. Interacts with PqqE.

It participates in cofactor biosynthesis; pyrroloquinoline quinone biosynthesis. Functions as a PqqA binding protein and presents PqqA to PqqE, in the pyrroloquinoline quinone (PQQ) biosynthetic pathway. This is PqqA binding protein from Rhodopseudomonas palustris (strain HaA2).